The following is a 367-amino-acid chain: Histidinol-phosphate aminotransferase (367 aa).

Lysine 225 carries the post-translational modification N6-(pyridoxal phosphate)lysine.

This sequence belongs to the class-II pyridoxal-phosphate-dependent aminotransferase family. Histidinol-phosphate aminotransferase subfamily. As to quaternary structure, homodimer. It depends on pyridoxal 5'-phosphate as a cofactor.

It carries out the reaction L-histidinol phosphate + 2-oxoglutarate = 3-(imidazol-4-yl)-2-oxopropyl phosphate + L-glutamate. Its pathway is amino-acid biosynthesis; L-histidine biosynthesis; L-histidine from 5-phospho-alpha-D-ribose 1-diphosphate: step 7/9. This chain is Histidinol-phosphate aminotransferase, found in Hyphomonas neptunium (strain ATCC 15444).